The sequence spans 154 residues: Ribonuclease H (154 aa).

The region spanning 1 to 142 is the RNase H type-1 domain; sequence MTKHVEIFTD…CDELARTAAE (142 aa). Mg(2+) is bound by residues aspartate 10, glutamate 48, aspartate 70, and aspartate 134.

It belongs to the RNase H family. As to quaternary structure, monomer. The cofactor is Mg(2+).

It localises to the cytoplasm. The enzyme catalyses Endonucleolytic cleavage to 5'-phosphomonoester.. In terms of biological role, endonuclease that specifically degrades the RNA of RNA-DNA hybrids. The sequence is that of Ribonuclease H from Vibrio campbellii (strain ATCC BAA-1116).